The sequence spans 333 residues: Galactinol synthase 1 (333 aa).

Lys-104 is a catalytic residue. Residues Asp-120, Asp-122, and His-257 each coordinate Mn(2+).

The protein belongs to the glycosyltransferase 8 family. Galactosyltransferase subfamily. A divalent metal cation is required as a cofactor. In terms of tissue distribution, expressed in source leaves, specifically in the mesophyll.

It is found in the cytoplasm. It carries out the reaction myo-inositol + UDP-alpha-D-galactose = alpha-D-galactosyl-(1-&gt;3)-1D-myo-inositol + UDP + H(+). Functionally, major galactinol synthase mainly involved in the biosynthesis of storage raffinose family oligosaccharides (RFOs) that function as osmoprotectants. May promote plant stress tolerance. In Ajuga reptans (Bugle), this protein is Galactinol synthase 1 (GOLS1).